The primary structure comprises 428 residues: Adenylosuccinate synthetase (428 aa).

GTP-binding positions include 12–18 (GDEGKGK) and 40–42 (GHT). The active-site Proton acceptor is the D13. Residues D13 and G40 each contribute to the Mg(2+) site. Residues 13 to 16 (DEGK), 38 to 41 (NAGH), T131, R145, Q226, T241, and R305 each bind IMP. Residue H41 is the Proton donor of the active site. 301-307 (ATTGRKR) contacts substrate. GTP contacts are provided by residues R307, 333–335 (KLD), and 415–417 (SVG).

It belongs to the adenylosuccinate synthetase family. As to quaternary structure, homodimer. Mg(2+) is required as a cofactor.

It localises to the cytoplasm. The catalysed reaction is IMP + L-aspartate + GTP = N(6)-(1,2-dicarboxyethyl)-AMP + GDP + phosphate + 2 H(+). It participates in purine metabolism; AMP biosynthesis via de novo pathway; AMP from IMP: step 1/2. Functionally, plays an important role in the de novo pathway of purine nucleotide biosynthesis. Catalyzes the first committed step in the biosynthesis of AMP from IMP. The chain is Adenylosuccinate synthetase from Nitratidesulfovibrio vulgaris (strain DSM 19637 / Miyazaki F) (Desulfovibrio vulgaris).